The sequence spans 151 residues: Odorant-binding protein (151 aa).

2 disulfides stabilise this stretch: Cys38-Cys42 and Cys57-Cys149.

The protein belongs to the calycin superfamily. Lipocalin family. Expressed in salivary glands, hair and urine.

The protein localises to the secreted. In terms of biological role, may act as a pheromone. This is Odorant-binding protein from Phodopus sungorus (Striped hairy-footed hamster).